A 505-amino-acid polypeptide reads, in one-letter code: Annexin A11 (505 aa).

Composition is skewed to pro residues over residues 1-17 and 99-160; these read MSYPGYPPPPGGYPPAA and PVPP…PVPL. 2 disordered regions span residues 1–38 and 84–199; these read MSYPGYPPPPGGYPPAAPGGGPWGGAAYPPPPSMPPIG and PVPP…DAPG. A compositionally biased stretch (low complexity) spans 161-177; sequence PGQQQPVPSYPGYPGSG. Annexin repeat units follow at residues 200-271, 272-343, 355-427, and 431-502; these read FDPL…ALMK, TPVL…SLSQ, SLAQ…AVVK, and NTPA…KICG. Residues K248 and K255 each carry the N6-acetyllysine modification. K479 is modified (N6-acetyllysine).

It belongs to the annexin family. In terms of assembly, interacts with S100A6. Interacts with PDCD6 in a calcium-dependent manner. Interacts with KIF23 during cytokinesis.

It localises to the cytoplasm. Its subcellular location is the melanosome. The protein localises to the nucleus envelope. The protein resides in the nucleus. It is found in the nucleoplasm. It localises to the cytoskeleton. Its subcellular location is the spindle. Its function is as follows. Binds specifically to calcyclin in a calcium-dependent manner. Required for midbody formation and completion of the terminal phase of cytokinesis. This is Annexin A11 (ANXA11) from Homo sapiens (Human).